We begin with the raw amino-acid sequence, 165 residues long: uncharacterized protein (165 aa).

It belongs to the IIV-6 196R family.

This is an uncharacterized protein from Invertebrate iridescent virus 3 (IIV-3).